A 606-amino-acid polypeptide reads, in one-letter code: Gastrula zinc finger protein XlCGF66.1 (606 aa).

Disordered regions lie at residues 1–31 and 240–271; these read MGMWEEASDTGMKGKKKKKDKNEEEEERGKK and TLHSKDSCNEGHKHLSHKSDYNKHQNPHKRQK. Over residues 242 to 262 the composition is skewed to basic and acidic residues; the sequence is HSKDSCNEGHKHLSHKSDYNK. 11 C2H2-type zinc fingers span residues 273–295, 300–322, 328–350, 384–407, 413–435, 441–464, 470–492, 498–521, 527–549, 555–578, and 584–606; these read FSCSKCGKCFSNLTSLHCHQKTH, LLCLKCGKCFATSSKLIIHRQTH, FSCSECRICFSKQSSLARHQITH, DFCSECGKCFATSSQLIAHQQQVH, FSCTKCGKCFSYRSRLVRHQRTH, YSCSECGKCFASSSHLIGHRQQVH, FFCSECGKYFLYQSQLVRHQRTH, YSCSECGKCFATSSQLMAHQQQVH, FSCSECGKYFLYRAHLVRHQRTH, DFCFECGKCFATSLQLIAHQQQVH, and FSCSECGKSFLYRSHLARHHRTH.

The protein belongs to the krueppel C2H2-type zinc-finger protein family.

The protein resides in the nucleus. In terms of biological role, may be involved in transcriptional regulation. The protein is Gastrula zinc finger protein XlCGF66.1 of Xenopus laevis (African clawed frog).